We begin with the raw amino-acid sequence, 433 residues long: Phosphomethylpyrimidine synthase (433 aa).

Substrate-binding positions include asparagine 69, methionine 98, tyrosine 127, histidine 163, 185–187 (SRG), 226–229 (DACR), and glutamate 265. Histidine 269 is a Zn(2+) binding site. A substrate-binding site is contributed by tyrosine 292. A Zn(2+)-binding site is contributed by histidine 333. Residues cysteine 409, cysteine 412, and cysteine 416 each coordinate [4Fe-4S] cluster.

This sequence belongs to the ThiC family. It depends on [4Fe-4S] cluster as a cofactor.

The enzyme catalyses 5-amino-1-(5-phospho-beta-D-ribosyl)imidazole + S-adenosyl-L-methionine = 4-amino-2-methyl-5-(phosphooxymethyl)pyrimidine + CO + 5'-deoxyadenosine + formate + L-methionine + 3 H(+). It functions in the pathway cofactor biosynthesis; thiamine diphosphate biosynthesis. Functionally, catalyzes the synthesis of the hydroxymethylpyrimidine phosphate (HMP-P) moiety of thiamine from aminoimidazole ribotide (AIR) in a radical S-adenosyl-L-methionine (SAM)-dependent reaction. In Clostridioides difficile (strain 630) (Peptoclostridium difficile), this protein is Phosphomethylpyrimidine synthase.